A 635-amino-acid chain; its full sequence is Bifunctional lysine-specific demethylase and histidyl-hydroxylase NO66 (635 aa).

Disordered regions lie at residues 1-115 (MSAV…LQNS) and 141-190 (FNGE…KANG). The segment covering 84-99 (ASASDINTSASKNVNA) has biased composition (low complexity). A compositionally biased stretch (polar residues) spans 141 to 156 (FNGESLKNNSNHSTPV). Residues 295–440 (CSIRMLNPQT…DLLELFFPHA (146 aa)) form the JmjC domain. Fe cation contacts are provided by histidine 341, aspartate 343, and histidine 406.

Belongs to the ROX family. NO66 subfamily. Requires Fe(2+) as cofactor.

The protein localises to the nucleus. It carries out the reaction N(6),N(6)-dimethyl-L-lysyl(36)-[histone H3] + 2 2-oxoglutarate + 2 O2 = L-lysyl(36)-[histone H3] + 2 formaldehyde + 2 succinate + 2 CO2. Oxygenase that can act as both a histone lysine demethylase and a ribosomal histidine hydroxylase. Specifically demethylates 'Lys-4' (H3K4me) and 'Lys-36' (H3K36me) of histone H3, thereby playing a central role in histone code. This Aedes aegypti (Yellowfever mosquito) protein is Bifunctional lysine-specific demethylase and histidyl-hydroxylase NO66.